A 561-amino-acid chain; its full sequence is Cytochrome P450 monooxygenase avaL (561 aa).

A helical transmembrane segment spans residues 19–39 (IAASCALVCIVSACYVVWSLL). Heme is bound at residue C508.

Belongs to the cytochrome P450 family. Heme serves as cofactor.

The protein localises to the membrane. It participates in secondary metabolite biosynthesis. Functionally, cytochrome P450 monooxygenase; part of the cluster that mediates the biosynthesis of a highly modified cyclo-arginine-tryptophan dipeptide (cRW). The first step of the pathway is perfornmed by the arginine-containing cyclodipeptide synthase (RCPDS) avaA that acts as the scaffold-generating enzyme and is responsible for formation of the cyclo-Arg-Trp (cRW) diketopiperazine. AvaB then acts as a multifunctional flavoenzyme that is responsible for generating the cyclo-Arg-formylkynurenine DKP, which can be deformylated by avaC. AvaB then further catalyzes an additional N-oxidation followed by cyclization and dehydration. The next step is an N-acetylation of the guanidine group catalyzed by the arginine N-acetyltransferase avaD. The roles of the additional enzymes identified within the ava cluster still have to be determined. The protein is Cytochrome P450 monooxygenase avaL of Aspergillus versicolor.